A 238-amino-acid polypeptide reads, in one-letter code: Tabinhibitin 5 (238 aa).

A signal peptide spans 1-23 (MTSILVSRFLLAALVLQYATIDA). A Cell attachment site motif is present at residues 32–34 (RGD). The SCP domain occupies 67–211 (LSKINDVRDH…KARALLTCNF (145 aa)).

This sequence belongs to the CRISP family. In terms of tissue distribution, expressed in salivary glands.

The protein localises to the secreted. Functionally, inhibits platelet aggregation induced by all agonists tested (ADP, arachidonic acid, the thromboxane A2 analog U46619, thrombin, and snake venom snaclecs (TMVA that activates platelet through GPIB, and stejnulxin that specifically acts through GPVI (GP6))). May act by competing with fibrinogen for binding to glycoprotein IIb/IIIa (ITGA2B/ITGB3). The sequence is that of Tabinhibitin 5 from Tabanus yao (Horsefly).